The following is a 597-amino-acid chain: Elongation factor 4 (597 aa).

The tr-type G domain occupies 2-184; the sequence is QHIRNFSIIA…SIVARVPPPK (183 aa). GTP is bound by residues 14–19 and 131–134; these read DHGKST and NKMD.

It belongs to the TRAFAC class translation factor GTPase superfamily. Classic translation factor GTPase family. LepA subfamily.

The protein resides in the cell inner membrane. It carries out the reaction GTP + H2O = GDP + phosphate + H(+). Required for accurate and efficient protein synthesis under certain stress conditions. May act as a fidelity factor of the translation reaction, by catalyzing a one-codon backward translocation of tRNAs on improperly translocated ribosomes. Back-translocation proceeds from a post-translocation (POST) complex to a pre-translocation (PRE) complex, thus giving elongation factor G a second chance to translocate the tRNAs correctly. Binds to ribosomes in a GTP-dependent manner. The chain is Elongation factor 4 from Bordetella bronchiseptica (strain ATCC BAA-588 / NCTC 13252 / RB50) (Alcaligenes bronchisepticus).